The sequence spans 256 residues: Imidazole glycerol phosphate synthase subunit HisF (256 aa).

Catalysis depends on residues Asp-12 and Asp-131.

This sequence belongs to the HisA/HisF family. In terms of assembly, heterodimer of HisH and HisF.

It is found in the cytoplasm. The enzyme catalyses 5-[(5-phospho-1-deoxy-D-ribulos-1-ylimino)methylamino]-1-(5-phospho-beta-D-ribosyl)imidazole-4-carboxamide + L-glutamine = D-erythro-1-(imidazol-4-yl)glycerol 3-phosphate + 5-amino-1-(5-phospho-beta-D-ribosyl)imidazole-4-carboxamide + L-glutamate + H(+). Its pathway is amino-acid biosynthesis; L-histidine biosynthesis; L-histidine from 5-phospho-alpha-D-ribose 1-diphosphate: step 5/9. In terms of biological role, IGPS catalyzes the conversion of PRFAR and glutamine to IGP, AICAR and glutamate. The HisF subunit catalyzes the cyclization activity that produces IGP and AICAR from PRFAR using the ammonia provided by the HisH subunit. The polypeptide is Imidazole glycerol phosphate synthase subunit HisF (Bifidobacterium longum (strain DJO10A)).